We begin with the raw amino-acid sequence, 351 residues long: Glycerol-3-phosphate dehydrogenase [NAD(P)+] (351 aa).

NADPH contacts are provided by Ser18, Trp19, Arg38, and Lys122. Sn-glycerol 3-phosphate is bound by residues Lys122, Gly153, and Ser155. Ala157 is an NADPH binding site. Positions 208, 261, 271, 272, and 273 each coordinate sn-glycerol 3-phosphate. The active-site Proton acceptor is the Lys208. Arg272 is an NADPH binding site. Glu297 contributes to the NADPH binding site.

Belongs to the NAD-dependent glycerol-3-phosphate dehydrogenase family.

Its subcellular location is the cytoplasm. The catalysed reaction is sn-glycerol 3-phosphate + NAD(+) = dihydroxyacetone phosphate + NADH + H(+). It catalyses the reaction sn-glycerol 3-phosphate + NADP(+) = dihydroxyacetone phosphate + NADPH + H(+). Its pathway is membrane lipid metabolism; glycerophospholipid metabolism. Functionally, catalyzes the reduction of the glycolytic intermediate dihydroxyacetone phosphate (DHAP) to sn-glycerol 3-phosphate (G3P), the key precursor for phospholipid synthesis. The sequence is that of Glycerol-3-phosphate dehydrogenase [NAD(P)+] from Bordetella parapertussis (strain 12822 / ATCC BAA-587 / NCTC 13253).